The sequence spans 385 residues: Taurine hydroxylase-like protein SAT17 (385 aa).

Its pathway is mycotoxin biosynthesis. Taurine hydroxylase-like protein; part of the satratoxin SC3 cluster involved in the biosynthesis of satratoxins, trichothecene mycotoxins that are associated with human food poisonings. Satratoxins are suggested to be made by products of multiple gene clusters (SC1, SC2 and SC3) that encode 21 proteins in all, including polyketide synthases, acetyltransferases, and other enzymes expected to modify the trichothecene skeleton. SC1 encodes 10 proteins, SAT1 to SAT10. The largest are SAT8, which encodes a putative polyketide synthase (PKS) with a conventional non-reducing architecture, and SAT10, a putative protein containing four ankyrin repeats and thus may be involved in protein scaffolding. The putative short-chain reductase SAT3 may assist the PKS in some capacity. SAT6 contains a secretory lipase domain and acts probably as a trichothecene esterase. SAT5 encodes a putative acetyltransferase, and so, with SAT6, may affect endogenous protection from toxicity. The probable transcription factor SAT9 may regulate the expression of the SC1 cluster. SC2 encodes proteins SAT11 to SAT16, the largest of which encodes the putative reducing PKS SAT13. SAT11 is a cytochrome P450 monooxygenase, while SAT14 and SAT16 are probable acetyltransferases. The SC2 cluster may be regulated by the transcription factor SAT15. SC3 is a small cluster that encodes 5 proteins, SAT17 to SAT21. SAT21 is a putative MFS-type transporter which may have a role in exporting secondary metabolites. The four other proteins putatively encoded in SC3 include the taurine hydroxylase-like protein SAT17, the O-methyltransferase SAT18, the acetyltransferase SAT19, and the Cys6-type zinc finger SAT20, the latter being probably involved in regulation of SC3 expression. The protein is Taurine hydroxylase-like protein SAT17 of Stachybotrys chartarum (strain CBS 109288 / IBT 7711) (Toxic black mold).